The following is a 689-amino-acid chain: Beta-galactosidase BbgII (689 aa).

Arg-122 and Asn-160 together coordinate substrate. Catalysis depends on Glu-161, which acts as the Proton donor. Glu-320 (nucleophile) is an active-site residue. Substrate-binding positions include Trp-328 and 368–371 (EKWH).

Belongs to the glycosyl hydrolase 42 family.

The catalysed reaction is Hydrolysis of terminal non-reducing beta-D-galactose residues in beta-D-galactosides.. The protein is Beta-galactosidase BbgII of Bifidobacterium bifidum (strain DSM 20082 / JCM 1254 / BCRC 11844 / KCTC 3440 / E319f (Variant a)).